Here is a 602-residue protein sequence, read N- to C-terminus: Leishmanolysin (602 aa).

The first 39 residues, 1–39 (MSVDSSSTHRRRCVAARLVRLAAAGAAVTVAVGTAAAWA), serve as a signal peptide directing secretion. The propeptide at 40-100 (HAGALQHRCV…DPRPGSARSV (61 aa)) is activation peptide. 2 disulfide bridges follow: C125–C142 and C191–C230. H264 contacts Zn(2+). Residue E265 is part of the active site. Zn(2+) is bound at residue H268. N300 carries an N-linked (GlcNAc...) asparagine glycan. 7 disulfide bridges follow: C314/C386, C393/C455, C406/C425, C415/C489, C466/C510, C515/C565, and C535/C558. H334 contacts Zn(2+). An N-linked (GlcNAc...) asparagine glycan is attached at N407. N-linked (GlcNAc...) asparagine glycosylation occurs at N534. N577 carries the GPI-anchor amidated asparagine lipid modification. Residues 578-602 (TAAGRRGPRAAATALLVAALLAVAL) constitute a propeptide, removed in mature form.

The protein belongs to the peptidase M8 family. Zn(2+) serves as cofactor. Post-translationally, the phosphatidylinositol moiety of the GPI-anchor contains a fully saturated, unbranched 1-O-alkyl chain (mainly C24:0) and a mixture of fully saturated unbranched 2-O-acyl chains (C12:0, C14:0, C16:0, and C18:0).

The protein localises to the cell membrane. It carries out the reaction Preference for hydrophobic residues at P1 and P1' and basic residues at P2' and P3'. A model nonapeptide is cleaved at -Ala-Tyr-|-Leu-Lys-Lys-.. Its function is as follows. Has an integral role during the infection of macrophages in the mammalian host. The polypeptide is Leishmanolysin (gp63) (Leishmania major).